A 280-amino-acid polypeptide reads, in one-letter code: Tryptophan synthase alpha chain (280 aa).

Residues E50 and D61 each act as proton acceptor in the active site.

It belongs to the TrpA family. In terms of assembly, tetramer of two alpha and two beta chains.

It catalyses the reaction (1S,2R)-1-C-(indol-3-yl)glycerol 3-phosphate + L-serine = D-glyceraldehyde 3-phosphate + L-tryptophan + H2O. Its pathway is amino-acid biosynthesis; L-tryptophan biosynthesis; L-tryptophan from chorismate: step 5/5. In terms of biological role, the alpha subunit is responsible for the aldol cleavage of indoleglycerol phosphate to indole and glyceraldehyde 3-phosphate. This is Tryptophan synthase alpha chain from Methylorubrum extorquens (strain PA1) (Methylobacterium extorquens).